The chain runs to 500 residues: Centrosomal protein of 57 kDa (500 aa).

Low complexity predominate over residues M1–S16. The segment at M1 to F59 is disordered. The span at S22–P35 shows a compositional bias: polar residues. The residue at position 53 (S53) is a Phosphoserine. Residues T58–E239 are centrosome localization domain (CLD). Residues E63–R242 are a coiled coil. Disordered regions lie at residues S256 to T275 and Q432 to L478. Positions G278–L491 are mediates interaction with microtubules. Residues T389–S449 are a coiled coil. 2 stretches are compositionally biased toward basic and acidic residues: residues Q432–D444 and S461–R475.

The protein belongs to the translokin family. Interacts with FGF2 and RAP80. Does not interact with FGF1 or FGF2 isoform 24 kDa. Homodimer and homooligomer. Interacts with microtubules. Ubiquitous (at protein level). Expressed in testis, predominantly in round spermatids. Low expression is detected in other tissues.

It localises to the nucleus. Its subcellular location is the cytoplasm. The protein resides in the cytoskeleton. The protein localises to the microtubule organizing center. It is found in the centrosome. Its function is as follows. Centrosomal protein which may be required for microtubule attachment to centrosomes. May act by forming ring-like structures around microtubules. Mediates nuclear translocation and mitogenic activity of the internalized growth factor FGF2. The protein is Centrosomal protein of 57 kDa (Cep57) of Mus musculus (Mouse).